Consider the following 546-residue polypeptide: NAD(P)H-quinone oxidoreductase chain 4 (546 aa).

The next 14 membrane-spanning stretches (helical) occupy residues 24-44 (FPWL…IPFF), 56-76 (FALS…INGF), 106-126 (ISMP…LAAW), 132-152 (PKLF…VFAV), 156-176 (LLFF…LAIW), 188-208 (FIIY…AMGF), 232-252 (ILCY…VPLH), 263-283 (TAPV…YALL), 297-317 (FAPL…LTSF), 326-346 (IAYS…SFSS), 352-372 (AMLQ…LVGA), 396-416 (FALW…SGFV), 437-457 (VVMA…LLSM), and 484-504 (VYII…PRLV).

This sequence belongs to the complex I subunit 4 family.

It is found in the cellular thylakoid membrane. It carries out the reaction a plastoquinone + NADH + (n+1) H(+)(in) = a plastoquinol + NAD(+) + n H(+)(out). The enzyme catalyses a plastoquinone + NADPH + (n+1) H(+)(in) = a plastoquinol + NADP(+) + n H(+)(out). Its function is as follows. NDH-1 shuttles electrons from NAD(P)H, via FMN and iron-sulfur (Fe-S) centers, to quinones in the respiratory chain. The immediate electron acceptor for the enzyme in this species is believed to be plastoquinone. Couples the redox reaction to proton translocation (for every two electrons transferred, four hydrogen ions are translocated across the cytoplasmic membrane), and thus conserves the redox energy in a proton gradient. This is NAD(P)H-quinone oxidoreductase chain 4 from Prochlorococcus marinus (strain MIT 9515).